The chain runs to 498 residues: MRINPTTSGSAVSTVEEKKLGRIAQIIGPVLDVVFPPGKMPNIYNALVVKGRDTASQQINVTCEVQQLLGNNRVRAVAMSATDGLTRGMEVIDTGAPLSVPVGGATLGRIFNVLGEPVDNLGPVDTRTTSPIHRSAPAFIQLDTKLSIFETGIKVVDLLAPYRRGRKIGLFGGAGVGKTVLIMELINNIAKAHGGVSVFGGVGERTREGNDLYMEMKESGVINEKNIAESKVALVYGQMNEPPGARMRVGLTALTMAEYFRDVNEQDVLLFIDNIFRFVQAGSEVSALLGRMPSAVGYQPTLSTEMGSLQERITSTKEGSITSIQAVYVPADDLTDPAPATTFAHLDATTVLSRGLAAKGIYPAVDPLDSTSTMLQPWIVGEEHYETAQRVKQTLQRYKELQDIIAILGLDELSEEDRLTVARARKIERFLSQPFFVAEVFTGSPGKYVGLAETIRGFQLILSGELDGLPEQAFYLVGNIDEVTAKAMNLEKESNLKK.

172 to 179 (GGAGVGKT) provides a ligand contact to ATP.

The protein belongs to the ATPase alpha/beta chains family. In terms of assembly, F-type ATPases have 2 components, CF(1) - the catalytic core - and CF(0) - the membrane proton channel. CF(1) has five subunits: alpha(3), beta(3), gamma(1), delta(1), epsilon(1). CF(0) has four main subunits: a(1), b(1), b'(1) and c(9-12).

The protein localises to the plastid. It is found in the chloroplast thylakoid membrane. It catalyses the reaction ATP + H2O + 4 H(+)(in) = ADP + phosphate + 5 H(+)(out). Functionally, produces ATP from ADP in the presence of a proton gradient across the membrane. The catalytic sites are hosted primarily by the beta subunits. The polypeptide is ATP synthase subunit beta, chloroplastic (Phormium tenax (New Zealand flax)).